Here is a 308-residue protein sequence, read N- to C-terminus: Mycothiol acetyltransferase (308 aa).

N-acetyltransferase domains lie at 12 to 149 (DVLD…RPLG) and 165 to 308 (VTVR…RTET). Glutamate 43 is a 1D-myo-inositol 2-(L-cysteinylamino)-2-deoxy-alpha-D-glucopyranoside binding site. Residue 88–90 (LVV) participates in acetyl-CoA binding. Residues glutamate 192, lysine 231, and glutamate 240 each coordinate 1D-myo-inositol 2-(L-cysteinylamino)-2-deoxy-alpha-D-glucopyranoside. Residues 244–246 (VGV) and 251–257 (QGGGLGR) each bind acetyl-CoA. Tyrosine 278 is a 1D-myo-inositol 2-(L-cysteinylamino)-2-deoxy-alpha-D-glucopyranoside binding site.

The protein belongs to the acetyltransferase family. MshD subfamily. Monomer.

It catalyses the reaction 1D-myo-inositol 2-(L-cysteinylamino)-2-deoxy-alpha-D-glucopyranoside + acetyl-CoA = mycothiol + CoA + H(+). In terms of biological role, catalyzes the transfer of acetyl from acetyl-CoA to desacetylmycothiol (Cys-GlcN-Ins) to form mycothiol. This is Mycothiol acetyltransferase from Streptomyces bingchenggensis (strain BCW-1).